The chain runs to 487 residues: Protein nucleotidyltransferase YdiU (487 aa).

Positions 90, 92, 93, 113, 125, 126, 176, and 183 each coordinate ATP. The active-site Proton acceptor is Asp252. Residues Asn253 and Asp262 each coordinate Mg(2+). Asp262 is a binding site for ATP.

Belongs to the SELO family. Requires Mg(2+) as cofactor. Mn(2+) is required as a cofactor.

It carries out the reaction L-seryl-[protein] + ATP = 3-O-(5'-adenylyl)-L-seryl-[protein] + diphosphate. The catalysed reaction is L-threonyl-[protein] + ATP = 3-O-(5'-adenylyl)-L-threonyl-[protein] + diphosphate. It catalyses the reaction L-tyrosyl-[protein] + ATP = O-(5'-adenylyl)-L-tyrosyl-[protein] + diphosphate. The enzyme catalyses L-histidyl-[protein] + UTP = N(tele)-(5'-uridylyl)-L-histidyl-[protein] + diphosphate. It carries out the reaction L-seryl-[protein] + UTP = O-(5'-uridylyl)-L-seryl-[protein] + diphosphate. The catalysed reaction is L-tyrosyl-[protein] + UTP = O-(5'-uridylyl)-L-tyrosyl-[protein] + diphosphate. In terms of biological role, nucleotidyltransferase involved in the post-translational modification of proteins. It can catalyze the addition of adenosine monophosphate (AMP) or uridine monophosphate (UMP) to a protein, resulting in modifications known as AMPylation and UMPylation. In Ectopseudomonas mendocina (strain ymp) (Pseudomonas mendocina), this protein is Protein nucleotidyltransferase YdiU.